Here is a 220-residue protein sequence, read N- to C-terminus: Adenylate kinase (220 aa).

Position 10–15 (10–15) interacts with ATP; sequence GAGKGT. An NMP region spans residues 30–59; sequence STGDMLRAAVKAGTPLGLKAKEVMDGGNLV. AMP contacts are provided by residues Thr31, Arg36, 57–59, 85–88, and Gln92; these read NLV and GFPR. The tract at residues 122 to 159 is LID; that stretch reads GRRVHPASGRTYHIRFNPPQTAGMDDETGEPLVQRADD. Residues Arg123 and 132–133 each bind ATP; that span reads TY. Residues Arg156 and Arg167 each coordinate AMP. Gly205 lines the ATP pocket.

It belongs to the adenylate kinase family. In terms of assembly, monomer.

It is found in the cytoplasm. The enzyme catalyses AMP + ATP = 2 ADP. Its pathway is purine metabolism; AMP biosynthesis via salvage pathway; AMP from ADP: step 1/1. In terms of biological role, catalyzes the reversible transfer of the terminal phosphate group between ATP and AMP. Plays an important role in cellular energy homeostasis and in adenine nucleotide metabolism. This chain is Adenylate kinase, found in Chlorobium luteolum (strain DSM 273 / BCRC 81028 / 2530) (Pelodictyon luteolum).